A 181-amino-acid polypeptide reads, in one-letter code: UPF0398 protein LMHCC_0668 (181 aa).

This sequence belongs to the UPF0398 family.

In Listeria monocytogenes serotype 4a (strain HCC23), this protein is UPF0398 protein LMHCC_0668.